Reading from the N-terminus, the 414-residue chain is Multifunctional CCA protein (414 aa).

The ATP site is built by Gly8 and Arg11. Residues Gly8 and Arg11 each coordinate CTP. Residues Asp21 and Asp23 each contribute to the Mg(2+) site. Arg91, Arg137, and Arg140 together coordinate ATP. Residues Arg91, Arg137, and Arg140 each contribute to the CTP site. Residues 226–327 (TGVHVMMVVD…VTLFERCDAF (102 aa)) form the HD domain.

The protein belongs to the tRNA nucleotidyltransferase/poly(A) polymerase family. Bacterial CCA-adding enzyme type 1 subfamily. As to quaternary structure, monomer. Can also form homodimers and oligomers. Requires Mg(2+) as cofactor. The cofactor is Ni(2+).

The catalysed reaction is a tRNA precursor + 2 CTP + ATP = a tRNA with a 3' CCA end + 3 diphosphate. It catalyses the reaction a tRNA with a 3' CCA end + 2 CTP + ATP = a tRNA with a 3' CCACCA end + 3 diphosphate. In terms of biological role, catalyzes the addition and repair of the essential 3'-terminal CCA sequence in tRNAs without using a nucleic acid template. Adds these three nucleotides in the order of C, C, and A to the tRNA nucleotide-73, using CTP and ATP as substrates and producing inorganic pyrophosphate. tRNA 3'-terminal CCA addition is required both for tRNA processing and repair. Also involved in tRNA surveillance by mediating tandem CCA addition to generate a CCACCA at the 3' terminus of unstable tRNAs. While stable tRNAs receive only 3'-terminal CCA, unstable tRNAs are marked with CCACCA and rapidly degraded. The polypeptide is Multifunctional CCA protein (Herminiimonas arsenicoxydans).